The primary structure comprises 261 residues: 5'-nucleotidase SurE (261 aa).

4 residues coordinate a divalent metal cation: Asp-12, Asp-13, Ser-43, and Asn-99.

It belongs to the SurE nucleotidase family. Requires a divalent metal cation as cofactor.

It is found in the cytoplasm. The catalysed reaction is a ribonucleoside 5'-phosphate + H2O = a ribonucleoside + phosphate. Nucleotidase that shows phosphatase activity on nucleoside 5'-monophosphates. This chain is 5'-nucleotidase SurE, found in Polynucleobacter asymbioticus (strain DSM 18221 / CIP 109841 / QLW-P1DMWA-1) (Polynucleobacter necessarius subsp. asymbioticus).